We begin with the raw amino-acid sequence, 58 residues long: Cecropin-B (58 aa).

The N-terminal stretch at 1-21 (ILSFVFACLLALSAVSAAPEP) is a signal peptide.

This sequence belongs to the cecropin family.

The protein resides in the secreted. Its function is as follows. Cecropins have lytic and antibacterial activity against several Gram-positive and Gram-negative bacteria. This Spodoptera litura (Asian cotton leafworm) protein is Cecropin-B (CECB).